A 447-amino-acid chain; its full sequence is MREILHIQGGQCGNQIGAKFWEVVCDEHGIDPTGRYTGTSDLQLERVNVYYNEASCGRFVPRAVLMDLEPGTMDSVRTGPYGQIFRPDNFVFGQSGAGNNWAKGHYTEGAELIDSVLDVVRKEAENCDCLQGFQVCHSLGGGTGSGMGTLLISKIREEYPDRMMLTFSVFPSPKVSDTVVEPYNATLSVHQLVENADECMVLDNEALYDICFRTLKLTTPSFGDLNHLISATMSGVTCCLRFPGQLNSDLRKLAVNLIPFPRLHFFMVGFAPLTSRGSQQYRALTVPELTQQMWDAKNMMCAADPRHGRYLTASAMFRGKMSTKEVDEQMINVQNKNSSYFVEWIPNNVKSSVCDIPPTGLSMASTFVGNSTSIQEMFRRVSEQFTAMFRRKAFLHWYTGEGMDEMEFTEAESNMNDLVSEYQQYQDATADEEGEYEDEDQEAEDDM.

The GTP site is built by Gln-11, Glu-69, Ser-138, Gly-142, Thr-143, Gly-144, Asn-204, and Asn-226. Glu-69 serves as a coordination point for Mg(2+). Residues Val-419–Met-447 form a disordered region. Acidic residues predominate over residues Thr-429–Met-447.

This sequence belongs to the tubulin family. Dimer of alpha and beta chains. A typical microtubule is a hollow water-filled tube with an outer diameter of 25 nm and an inner diameter of 15 nM. Alpha-beta heterodimers associate head-to-tail to form protofilaments running lengthwise along the microtubule wall with the beta-tubulin subunit facing the microtubule plus end conferring a structural polarity. Microtubules usually have 13 protofilaments but different protofilament numbers can be found in some organisms and specialized cells. It depends on Mg(2+) as a cofactor.

Its subcellular location is the cytoplasm. It localises to the cytoskeleton. In terms of biological role, tubulin is the major constituent of microtubules, a cylinder consisting of laterally associated linear protofilaments composed of alpha- and beta-tubulin heterodimers. Microtubules grow by the addition of GTP-tubulin dimers to the microtubule end, where a stabilizing cap forms. Below the cap, tubulin dimers are in GDP-bound state, owing to GTPase activity of alpha-tubulin. In Hordeum vulgare (Barley), this protein is Tubulin beta chain (TUBB).